Consider the following 381-residue polypeptide: Cytochrome b (381 aa).

4 consecutive transmembrane segments (helical) span residues 34-54 (FGSLLGLCLIIQILTGLFLAM), 78-99 (WLIRNIHANGASLFFICIYLHI), 114-134 (WNIGVILLFLLMATAFVGYVL), and 179-199 (FFAFHFLLPFLILALTIIHLL). Residues His-84 and His-98 each coordinate heme b. Residues His-183 and His-197 each contribute to the heme b site. His-202 contacts a ubiquinone. 4 helical membrane-spanning segments follow: residues 227-247 (YKDILGFFAMIFFLAVLTLFI), 289-309 (LGGVLALLFSILILMLVPLLQ), 321-341 (MTQILFWFLVANSIILTWIGG), and 348-368 (FIMVGQIASISYFSMFLIIIP).

This sequence belongs to the cytochrome b family. The cytochrome bc1 complex contains 3 respiratory subunits (MT-CYB, CYC1 and UQCRFS1), 2 core proteins (UQCRC1 and UQCRC2) and probably 6 low-molecular weight proteins. Heme b serves as cofactor.

The protein localises to the mitochondrion inner membrane. In terms of biological role, component of the ubiquinol-cytochrome c reductase complex (complex III or cytochrome b-c1 complex) that is part of the mitochondrial respiratory chain. The b-c1 complex mediates electron transfer from ubiquinol to cytochrome c. Contributes to the generation of a proton gradient across the mitochondrial membrane that is then used for ATP synthesis. In Galeocerdo cuvier (Tiger shark), this protein is Cytochrome b (mt-cyb).